The primary structure comprises 510 residues: GMP synthase [glutamine-hydrolyzing] (510 aa).

Residues leucine 5–aspartate 195 enclose the Glutamine amidotransferase type-1 domain. Catalysis depends on cysteine 82, which acts as the Nucleophile. Active-site residues include histidine 169 and glutamate 171. Positions tryptophan 196–arginine 385 constitute a GMPS ATP-PPase domain. Serine 223–serine 229 is an ATP binding site.

In terms of assembly, homodimer.

It carries out the reaction XMP + L-glutamine + ATP + H2O = GMP + L-glutamate + AMP + diphosphate + 2 H(+). Its pathway is purine metabolism; GMP biosynthesis; GMP from XMP (L-Gln route): step 1/1. Catalyzes the synthesis of GMP from XMP. This chain is GMP synthase [glutamine-hydrolyzing], found in Clostridium botulinum (strain Kyoto / Type A2).